Here is a 183-residue protein sequence, read N- to C-terminus: Dual-action ribosomal maturation protein DarP (183 aa).

A disordered region spans residues 1–21 (MKQKPEDWLNDVPDNQEDDED).

The protein belongs to the DarP family.

The protein localises to the cytoplasm. Member of a network of 50S ribosomal subunit biogenesis factors which assembles along the 30S-50S interface, preventing incorrect 23S rRNA structures from forming. Promotes peptidyl transferase center (PTC) maturation. The chain is Dual-action ribosomal maturation protein DarP from Pectobacterium atrosepticum (strain SCRI 1043 / ATCC BAA-672) (Erwinia carotovora subsp. atroseptica).